Reading from the N-terminus, the 366-residue chain is Ribosomal RNA large subunit methyltransferase M (366 aa).

Residues serine 188, 221–224 (CPGG), aspartate 240, aspartate 260, and aspartate 277 each bind S-adenosyl-L-methionine. Lysine 306 acts as the Proton acceptor in catalysis.

The protein belongs to the class I-like SAM-binding methyltransferase superfamily. RNA methyltransferase RlmE family. RlmM subfamily. As to quaternary structure, monomer.

Its subcellular location is the cytoplasm. It carries out the reaction cytidine(2498) in 23S rRNA + S-adenosyl-L-methionine = 2'-O-methylcytidine(2498) in 23S rRNA + S-adenosyl-L-homocysteine + H(+). Its function is as follows. Catalyzes the 2'-O-methylation at nucleotide C2498 in 23S rRNA. The polypeptide is Ribosomal RNA large subunit methyltransferase M (Escherichia coli O127:H6 (strain E2348/69 / EPEC)).